A 594-amino-acid polypeptide reads, in one-letter code: APOBEC1 complementation factor (594 aa).

3 RRM domains span residues 56–134 (CEIF…ASVD), 136–218 (CRLF…WAEP), and 231–303 (KILY…LAKP). Positions 360–409 (HFPATKGHLSNRAIIRAPSVREIYMNVPVGAAGVRGLGGRGYLAYTGLGR) are required for nuclear localization. Thr499 carries the phosphothreonine modification.

In terms of assembly, part of the apolipoprotein B mRNA editing complex with APOBEC1. Interacts with TNPO2; TNPO2 may be responsible for transport of A1CF into the nucleus. Interacts with SYNCRIP. Interacts with CELF2/CUGBP2. Interacts with RBM47. In terms of tissue distribution, widely expressed with highest levels in brain, liver, pancreas, colon and spleen.

The protein resides in the nucleus. It is found in the endoplasmic reticulum. Its subcellular location is the cytoplasm. Essential component of the apolipoprotein B mRNA editing enzyme complex which is responsible for the postranscriptional editing of a CAA codon for Gln to a UAA codon for stop in APOB mRNA. Binds to APOB mRNA and is probably responsible for docking the catalytic subunit, APOBEC1, to the mRNA to allow it to deaminate its target cytosine. The complex also protects the edited APOB mRNA from nonsense-mediated decay. In Homo sapiens (Human), this protein is APOBEC1 complementation factor (A1CF).